A 915-amino-acid polypeptide reads, in one-letter code: Probable LRR receptor-like serine/threonine-protein kinase At2g16250 (915 aa).

A signal peptide spans 1–28 (MVDQRRSALGFVLLLLCLVLFFDCVVVG). The Extracellular portion of the chain corresponds to 29-451 (QTQSRFSEKL…ISRRTVIILA (423 aa)). Residues Asn-71, Asn-78, Asn-101, Asn-109, Asn-150, Asn-158, and Asn-177 are each glycosylated (N-linked (GlcNAc...) asparagine). 11 LRR repeats span residues 102–125 (LTRLSYFNASGLALPGTIPEWFGV), 127–150 (LLALEVLDLSSCSVNGVVPFTLGN), 151–174 (LTSLRTLNLSQNSLTSLVPSSLGQ), 176–198 (LNLSQLDLSRNSFTGVLPQSFSS), 199–223 (LKNLLTLDVSSNYLTGPIPPGLGAL), 225–247 (KLIHLNFSSNSFSSPIPSELGDL), 248–271 (VNLVDFDLSINSLSGSVPQELRKL), 272–295 (SKLQLMAIGDNLLSGTLPVDLFSA), 297–320 (SQLQTLVLRENGFSGSLPDVCWSL), 321–344 (PKLRILDIAKNNFTGLLPYSSYDS), and 366–390 (LRRFRIMDLSGNYFEGKLPDYVTGE). A glycan (N-linked (GlcNAc...) asparagine) is linked at Asn-230. An N-linked (GlcNAc...) asparagine glycan is attached at Asn-332. Asn-391, Asn-429, and Asn-437 each carry an N-linked (GlcNAc...) asparagine glycan. Residues 452–472 (AVGGGVAFILLFVILPIILVL) form a helical membrane-spanning segment. At 473–915 (CMRHRRRAAQ…AAYGVVEDNL (443 aa)) the chain is on the cytoplasmic side. The interval 482-503 (QRGNNDRPKPAGEASQQPPKGA) is disordered. The Protein kinase domain occupies 527–811 (FNDANLIKRG…IVNALENPLK (285 aa)). ATP contacts are provided by residues 533–541 (IKRGHSGNL) and Lys-555. Catalysis depends on Asp-657, which acts as the Proton acceptor. Residues 851–915 (TAVQAGATTS…AAYGVVEDNL (65 aa)) form a disordered region. A compositionally biased stretch (gly residues) spans 859–870 (TSGGGGGGGGNG). The segment covering 871 to 892 (LRNSGSQGSSGRNNNNNGNSSS) has biased composition (low complexity).

The protein belongs to the protein kinase superfamily. Ser/Thr protein kinase family.

Its subcellular location is the membrane. It catalyses the reaction L-seryl-[protein] + ATP = O-phospho-L-seryl-[protein] + ADP + H(+). The enzyme catalyses L-threonyl-[protein] + ATP = O-phospho-L-threonyl-[protein] + ADP + H(+). The protein is Probable LRR receptor-like serine/threonine-protein kinase At2g16250 of Arabidopsis thaliana (Mouse-ear cress).